We begin with the raw amino-acid sequence, 119 residues long: Large ribosomal subunit protein uL22 (119 aa).

This sequence belongs to the universal ribosomal protein uL22 family. In terms of assembly, part of the 50S ribosomal subunit.

Its function is as follows. This protein binds specifically to 23S rRNA; its binding is stimulated by other ribosomal proteins, e.g. L4, L17, and L20. It is important during the early stages of 50S assembly. It makes multiple contacts with different domains of the 23S rRNA in the assembled 50S subunit and ribosome. In terms of biological role, the globular domain of the protein is located near the polypeptide exit tunnel on the outside of the subunit, while an extended beta-hairpin is found that lines the wall of the exit tunnel in the center of the 70S ribosome. The sequence is that of Large ribosomal subunit protein uL22 from Bifidobacterium adolescentis (strain ATCC 15703 / DSM 20083 / NCTC 11814 / E194a).